Here is a 361-residue protein sequence, read N- to C-terminus: DNA replication and repair protein RecF (361 aa).

Residue 30 to 37 (GANGSGKT) participates in ATP binding.

It belongs to the RecF family.

The protein localises to the cytoplasm. Functionally, the RecF protein is involved in DNA metabolism; it is required for DNA replication and normal SOS inducibility. RecF binds preferentially to single-stranded, linear DNA. It also seems to bind ATP. The chain is DNA replication and repair protein RecF from Chromohalobacter salexigens (strain ATCC BAA-138 / DSM 3043 / CIP 106854 / NCIMB 13768 / 1H11).